A 209-amino-acid polypeptide reads, in one-letter code: Chloramphenicol acetyltransferase (209 aa).

H78 is an active-site residue.

It belongs to the transferase hexapeptide repeat family.

The enzyme catalyses chloramphenicol + acetyl-CoA = chloramphenicol 3-acetate + CoA. In terms of biological role, this enzyme is an effector of chloramphenicol resistance in bacteria. This chain is Chloramphenicol acetyltransferase (cat), found in Agrobacterium fabrum (strain C58 / ATCC 33970) (Agrobacterium tumefaciens (strain C58)).